Here is a 370-residue protein sequence, read N- to C-terminus: S-adenosylmethionine:tRNA ribosyltransferase-isomerase (370 aa).

The protein belongs to the QueA family. Monomer.

It localises to the cytoplasm. It catalyses the reaction 7-aminomethyl-7-carbaguanosine(34) in tRNA + S-adenosyl-L-methionine = epoxyqueuosine(34) in tRNA + adenine + L-methionine + 2 H(+). The protein operates within tRNA modification; tRNA-queuosine biosynthesis. In terms of biological role, transfers and isomerizes the ribose moiety from AdoMet to the 7-aminomethyl group of 7-deazaguanine (preQ1-tRNA) to give epoxyqueuosine (oQ-tRNA). In Synechococcus sp. (strain WH7803), this protein is S-adenosylmethionine:tRNA ribosyltransferase-isomerase.